The following is a 674-amino-acid chain: Dymeclin (674 aa).

Gly-2 is lipidated: N-myristoyl glycine.

The protein belongs to the dymeclin family. In terms of assembly, interacts with GOLM1 and PPIB. Post-translationally, myristoylated in vitro; myristoylation is not essential for protein targeting to Golgi compartment.

The protein localises to the cytoplasm. The protein resides in the golgi apparatus. Its subcellular location is the membrane. Its function is as follows. Necessary for correct organization of Golgi apparatus. Involved in bone development. This chain is Dymeclin (Dym), found in Rattus norvegicus (Rat).